The following is a 78-amino-acid chain: Sperm-specific protein Phi-0 (78 aa).

Composition is skewed to basic residues over residues 1-21, 31-57, and 64-78; these read MVARRQTKKARKPAARRRSAA, AASRRRPKSAKKAKPAARRRSSVKPKA, and VRRRSRRIRRASVSK. The tract at residues 1–78 is disordered; the sequence is MVARRQTKKA…RRIRRASVSK (78 aa).

It localises to the nucleus. Its subcellular location is the chromosome. Involved in nuclear basic protein transition: histones are replaced by spermatid specific proteins which are themselves replaced by protamines in late spermatids. The protein is Sperm-specific protein Phi-0 of Holothuria tubulosa (Tubular sea cucumber).